The primary structure comprises 355 residues: Cobalt-precorrin-5B C(1)-methyltransferase (355 aa).

The protein belongs to the CbiD family.

It catalyses the reaction Co-precorrin-5B + S-adenosyl-L-methionine = Co-precorrin-6A + S-adenosyl-L-homocysteine. Its pathway is cofactor biosynthesis; adenosylcobalamin biosynthesis; cob(II)yrinate a,c-diamide from sirohydrochlorin (anaerobic route): step 6/10. Functionally, catalyzes the methylation of C-1 in cobalt-precorrin-5B to form cobalt-precorrin-6A. The protein is Cobalt-precorrin-5B C(1)-methyltransferase of Sulfolobus acidocaldarius (strain ATCC 33909 / DSM 639 / JCM 8929 / NBRC 15157 / NCIMB 11770).